A 1563-amino-acid chain; its full sequence is Superkiller complex protein 3 (1563 aa).

The residue at position 2 (Ser-2) is an N-acetylserine. 22 TPR repeats span residues 6–39 (VKTALKSARDAIRNKEYKEALKHCKTVLKQEKNN), 40–73 (YNAWVFIGVAAAELEQPDQAQGAYKKAAELEPEQ), 157–196 (YELWRKLSQLLAENIEDQNNETQQMLLTAFENALDLADNI), 272–305 (GPGLIGLGIIALQDKKYEDAVRHLTEGLKESPVC), 307–339 (AGWCHLAEAQVKMHRPKEAILSCNQALKTIDNF), 386–419 (PGLLVLQGLACLNTGAVDKATKIMEDLVTSYPDL), 420–453 (AEAHALEGRVHFTKKDYVQAEVSFQRALEKDAEV), 455–492 (EYHYQLGLTYWFMGEETRKDKTKALTHFLKAARLDAHM), 493–527 (GKVFCYLGHYYRDVAGDRNRARGCYRKAFELDDND), 564–597 (KWAWLRRGLYHLKAGQHSQAVADLQAALRADPKD), 598–631 (CNCWESLGEAYLSRGGYTTALKSFMKASELNPDS), 632–665 (TYSVFKVAAIQQILGRYSEAIAQYQLIIKMKEDY), 633–665 (YSVFKVAAIQQILGRYSEAIAQYQLIIKMKEDY), 673–713 (GECH…RADV), 790–824 (VQHLAETGSSMSDLTELLEKSLHCLKKAVRLDSNN), 826–860 (LHWNALGVVACYRGVGNYALAQHCFIKSIQAEQIN), 861–894 (AAAWTNLGVLYLATENIEQAHEAFKMAQSLDPSY), 980–1013 (ASAFTMLGYLNEHLQLKKEAAEAYQRATTLLHSA), 1020–1053 (NVAVRNWGRLLCSIGDYDRAIQAFKSTPLVELED), 1055–1084 (IGFALALFMKGLYKESGSAYERALAVCKSE), 1325–1358 (KWSFSQVVTGLIDTGKTSEAESLCTQSLKSNPDQ), and 1399–1432 (VPAWQWLAQVYQSQGMMGAAEMCYRKSLQVASQQ).

This sequence belongs to the SKI3 family. Component of the SKI complex which consists of SKIC2, SKIC3 and SKIC8. Interacts with PAF1.

The protein localises to the cytoplasm. It localises to the nucleus. Component of the SKI complex, a multiprotein complex that assists the RNA-degrading exosome during the mRNA decay and quality-control pathways. The SKI complex catalyzes mRNA extraction from 80S ribosomal complexes in the 3'-5' direction and channels mRNA to the cytosolic exosome for degradation. SKI-mediated extraction of mRNA from stalled ribosomes allow binding of the Pelota-HBS1L complex and subsequent ribosome disassembly by ABCE1 for ribosome recycling. In the nucleus, the SKI complex associates with transcriptionally active genes in a manner dependent on PAF1 complex (PAF1C). This is Superkiller complex protein 3 from Mus musculus (Mouse).